A 242-amino-acid polypeptide reads, in one-letter code: Orotidine 5'-phosphate decarboxylase (242 aa).

Substrate is bound by residues aspartate 22, lysine 44, 71-80, threonine 130, arginine 190, glutamine 199, glycine 219, and arginine 220; that span reads DLKYHDIPNT. The Proton donor role is filled by lysine 73.

It belongs to the OMP decarboxylase family. Type 1 subfamily. As to quaternary structure, homodimer.

It carries out the reaction orotidine 5'-phosphate + H(+) = UMP + CO2. It functions in the pathway pyrimidine metabolism; UMP biosynthesis via de novo pathway; UMP from orotate: step 2/2. Functionally, catalyzes the decarboxylation of orotidine 5'-monophosphate (OMP) to uridine 5'-monophosphate (UMP). This Laribacter hongkongensis (strain HLHK9) protein is Orotidine 5'-phosphate decarboxylase.